Reading from the N-terminus, the 196-residue chain is UPF0215 protein MA_4269 (196 aa).

The protein belongs to the UPF0215 family.

This Methanosarcina acetivorans (strain ATCC 35395 / DSM 2834 / JCM 12185 / C2A) protein is UPF0215 protein MA_4269.